We begin with the raw amino-acid sequence, 161 residues long: C-type lectin lectoxin-Lio3 (161 aa).

Positions 1–23 are cleaved as a signal peptide; it reads MRRFIFMSLGLLVLAFSLSGIGA. Cystine bridges form between Cys27–Cys38, Cys55–Cys154, and Cys129–Cys146. The C-type lectin domain maps to 34-155; that stretch reads HNISCYKLFT…CGLLHYFICQ (122 aa). A glycan (N-linked (GlcNAc...) asparagine) is linked at Asn35. The Mannose-binding motif lies at 117-119; that stretch reads KGE. The Ca(2+) site is built by Glu127, Asn142, and Asp143.

This sequence belongs to the true venom lectin family. Expressed by the venom gland.

It localises to the secreted. Its function is as follows. Mannose-binding lectin which recognizes specific carbohydrate structures and agglutinates a variety of animal cells by binding to cell-surface glycoproteins and glycolipids. May be a calcium-dependent lectin. The polypeptide is C-type lectin lectoxin-Lio3 (Erythrolamprus poecilogyrus (Water snake)).